A 480-amino-acid chain; its full sequence is Aspartyl/glutamyl-tRNA(Asn/Gln) amidotransferase subunit B (480 aa).

This sequence belongs to the GatB/GatE family. GatB subfamily. In terms of assembly, heterotrimer of A, B and C subunits.

It carries out the reaction L-glutamyl-tRNA(Gln) + L-glutamine + ATP + H2O = L-glutaminyl-tRNA(Gln) + L-glutamate + ADP + phosphate + H(+). The catalysed reaction is L-aspartyl-tRNA(Asn) + L-glutamine + ATP + H2O = L-asparaginyl-tRNA(Asn) + L-glutamate + ADP + phosphate + 2 H(+). Its function is as follows. Allows the formation of correctly charged Asn-tRNA(Asn) or Gln-tRNA(Gln) through the transamidation of misacylated Asp-tRNA(Asn) or Glu-tRNA(Gln) in organisms which lack either or both of asparaginyl-tRNA or glutaminyl-tRNA synthetases. The reaction takes place in the presence of glutamine and ATP through an activated phospho-Asp-tRNA(Asn) or phospho-Glu-tRNA(Gln). In Caldicellulosiruptor bescii (strain ATCC BAA-1888 / DSM 6725 / KCTC 15123 / Z-1320) (Anaerocellum thermophilum), this protein is Aspartyl/glutamyl-tRNA(Asn/Gln) amidotransferase subunit B.